A 59-amino-acid chain; its full sequence is MAETIKIKLVKSKIGTLPKQRQNLEALGLKKIGQVVEQKDNPQIRGMIDKVSHLVQVIE.

This sequence belongs to the universal ribosomal protein uL30 family. Part of the 50S ribosomal subunit.

This chain is Large ribosomal subunit protein uL30, found in Alkaliphilus metalliredigens (strain QYMF).